The sequence spans 122 residues: Large ribosomal subunit protein uL14 (122 aa).

It belongs to the universal ribosomal protein uL14 family. As to quaternary structure, part of the 50S ribosomal subunit. Forms a cluster with proteins L3 and L19. In the 70S ribosome, L14 and L19 interact and together make contacts with the 16S rRNA in bridges B5 and B8.

Functionally, binds to 23S rRNA. Forms part of two intersubunit bridges in the 70S ribosome. In Lactococcus lactis subsp. lactis (strain IL1403) (Streptococcus lactis), this protein is Large ribosomal subunit protein uL14.